The chain runs to 296 residues: GTPase Era (296 aa).

The Era-type G domain occupies 7–174; it reads KCSMNAIVGT…INYLCEISPS (168 aa). The interval 15 to 22 is G1; it reads GTTNAGKS. GTP is bound at residue 15-22; that stretch reads GTTNAGKS. A G2 region spans residues 41–45; that stretch reads QTTRV. The tract at residues 62–65 is G3; sequence DTPG. Residues 62–66 and 124–127 contribute to the GTP site; these read DTPGI and NKID. Residues 124 to 127 form a G4 region; the sequence is NKID. Positions 153 to 155 are G5; sequence ISA. The region spanning 205-282 is the KH type-2 domain; sequence LHHELPYSLS…HLFLFVKVRE (78 aa).

Belongs to the TRAFAC class TrmE-Era-EngA-EngB-Septin-like GTPase superfamily. Era GTPase family. In terms of assembly, monomer.

The protein resides in the cytoplasm. It localises to the cell inner membrane. Its function is as follows. An essential GTPase that binds both GDP and GTP, with rapid nucleotide exchange. Plays a role in 16S rRNA processing and 30S ribosomal subunit biogenesis and possibly also in cell cycle regulation and energy metabolism. The protein is GTPase Era of Ehrlichia canis (strain Jake).